A 503-amino-acid chain; its full sequence is Cytochrome P450 3A15 (503 aa).

Heme is bound at residue Cys-442.

The protein belongs to the cytochrome P450 family. The cofactor is heme.

The protein localises to the endoplasmic reticulum membrane. The protein resides in the microsome membrane. It carries out the reaction an organic molecule + reduced [NADPH--hemoprotein reductase] + O2 = an alcohol + oxidized [NADPH--hemoprotein reductase] + H2O + H(+). Its function is as follows. Cytochromes P450 are a group of heme-thiolate monooxygenases. In liver microsomes, this enzyme is involved in an NADPH-dependent electron transport pathway. It oxidizes a variety of structurally unrelated compounds, including steroids, fatty acids, and xenobiotics. The protein is Cytochrome P450 3A15 (CYP3A15) of Cavia porcellus (Guinea pig).